A 749-amino-acid chain; its full sequence is NAD(P)H-quinone oxidoreductase subunit 5, chloroplastic (749 aa).

Helical transmembrane passes span 9-29 (WIIP…LLLV), 40-60 (WAFF…DLSI), 89-109 (IDPL…MVLI), 147-167 (IYIF…FWFT), 185-205 (GDFG…SFEF), 219-239 (NGVN…GAVA), 258-278 (TPIS…FLVA), 280-300 (LLPL…IGVI), 327-347 (LGYI…FHLI), 354-374 (ALLF…VGYS), 396-416 (ITFL…CFWS), 425-445 (WLYS…TAFY), 544-564 (TMLL…FIGV), 605-625 (IFSV…YGSV), 694-714 (GITN…KYVG), and 722-742 (LFLY…CFGI).

The protein belongs to the complex I subunit 5 family. NDH is composed of at least 16 different subunits, 5 of which are encoded in the nucleus.

It is found in the plastid. The protein resides in the chloroplast thylakoid membrane. The enzyme catalyses a plastoquinone + NADH + (n+1) H(+)(in) = a plastoquinol + NAD(+) + n H(+)(out). It carries out the reaction a plastoquinone + NADPH + (n+1) H(+)(in) = a plastoquinol + NADP(+) + n H(+)(out). Its function is as follows. NDH shuttles electrons from NAD(P)H:plastoquinone, via FMN and iron-sulfur (Fe-S) centers, to quinones in the photosynthetic chain and possibly in a chloroplast respiratory chain. The immediate electron acceptor for the enzyme in this species is believed to be plastoquinone. Couples the redox reaction to proton translocation, and thus conserves the redox energy in a proton gradient. The chain is NAD(P)H-quinone oxidoreductase subunit 5, chloroplastic (ndhF) from Illicium oligandrum (Star anise).